Here is a 71-residue protein sequence, read N- to C-terminus: uncharacterized protein (71 aa).

Residues 52-71 (KEKFERKEDEKSKPKGVRED) are disordered.

This is an uncharacterized protein from Archaeoglobus fulgidus (strain ATCC 49558 / DSM 4304 / JCM 9628 / NBRC 100126 / VC-16).